We begin with the raw amino-acid sequence, 348 residues long: Phospho-2-dehydro-3-deoxyheptonate aldolase, Trp-sensitive (348 aa).

Belongs to the class-I DAHP synthase family.

It carries out the reaction D-erythrose 4-phosphate + phosphoenolpyruvate + H2O = 7-phospho-2-dehydro-3-deoxy-D-arabino-heptonate + phosphate. It functions in the pathway metabolic intermediate biosynthesis; chorismate biosynthesis; chorismate from D-erythrose 4-phosphate and phosphoenolpyruvate: step 1/7. Functionally, stereospecific condensation of phosphoenolpyruvate (PEP) and D-erythrose-4-phosphate (E4P) giving rise to 3-deoxy-D-arabino-heptulosonate-7-phosphate (DAHP). This is Phospho-2-dehydro-3-deoxyheptonate aldolase, Trp-sensitive (aroH) from Salmonella typhimurium (strain LT2 / SGSC1412 / ATCC 700720).